The primary structure comprises 66 residues: Small ribosomal subunit protein bS21 (66 aa).

The interval 47–66 (KAQEAARRKRKFARKRMYED) is disordered. A compositionally biased stretch (basic residues) spans 53–66 (RRKRKFARKRMYED).

It belongs to the bacterial ribosomal protein bS21 family.

The chain is Small ribosomal subunit protein bS21 from Rickettsia bellii (strain RML369-C).